Reading from the N-terminus, the 161-residue chain is Allophycocyanin beta chain (161 aa).

Asparagine 71 carries the N4-methylasparagine modification. Cysteine 81 provides a ligand contact to (2R,3E)-phycocyanobilin.

The protein belongs to the phycobiliprotein family. Heterodimer of an alpha and a beta chain. In terms of processing, contains one covalently linked phycocyanobilin chromophore.

The protein localises to the plastid. The protein resides in the chloroplast thylakoid membrane. Light-harvesting photosynthetic bile pigment-protein from the phycobiliprotein complex. Allophycocyanin has a maximum absorption at approximately 650 nanometers. In Aglaothamnion neglectum (Red alga), this protein is Allophycocyanin beta chain (apcB).